Here is a 181-residue protein sequence, read N- to C-terminus: Immunity-related GTPase family M protein (181 aa).

The 150-residue stretch at 32–181 (TPVNITMAGD…NLQKERVCEY (150 aa)) folds into the IRG-type G domain. Residues 41-48 (DSGNGMST), 66-70 (TELVK), and 147-149 (KLD) contribute to the GTP site.

It belongs to the TRAFAC class dynamin-like GTPase superfamily. IRG family. As to quaternary structure, interacts with ULK1; promoting the coassembly of ULK1 and BECN1. Interacts with BECN1; enhancing BECN1-interacting partners and influencing the composition of the BECN1 complex. Interacts with ATG16L1. Interacts with NOD2; promoting IRGM 'Lys-63'-linked polyubiquitination, which is required for interactions with the core autophagy factors. Interacts with STX17; promoting STX17 recruitment to autophagosomes. Interacts with ATG8 proteins (GABARAP, GABARAPL1, GABARAPL2, MAP1LC3A, MAP1LC3B and MAP1LC3C); promoting STX17 recruitment to autophagosomes. Interacts with TFEB; promoting association between TFEB and PPP3CB and TFEB dephosphorylation. Interacts with PPP3CB; promoting association between TFEB and PPP3CB and TFEB dephosphorylation. Interacts with NLRP3; preventing NLRP3 inflammasome assembly and promoting SQSTM1/p62-dependent autophagic degradation of NLRP3. Interacts with CGAS; promoting SQSTM1/p62-dependent autophagic degradation of CGAS. Interacts with RIGI/RIG-I; promoting SQSTM1/p62-dependent autophagic degradation of RIGI/RIG-I. Interacts with NOD1; promoting SQSTM1/p62-dependent autophagic degradation of RIGI/RIG-I. Interacts with NOD2; promoting SQSTM1/p62-dependent autophagic degradation of RIGI/RIG-I. Interacts with RIPK2; promoting SQSTM1/p62-dependent autophagic degradation of RIGI/RIG-I. Post-translationally, ubiquitinated via 'Lys-63'-linked polyubiquitination in a NOD2-dependent process. 'Lys-63'-linked polyubiquitination is required for interactions with the core autophagy factors. As to expression, widely expressed (at protein level). Expressed in several tissues including colon, small bowel and peripheral blood leukocytes.

Its subcellular location is the golgi apparatus membrane. The protein localises to the cell membrane. It is found in the cytoplasmic vesicle. The protein resides in the phagosome membrane. It localises to the autophagosome membrane. Its subcellular location is the lysosome membrane. The protein localises to the late endosome membrane. It is found in the mitochondrion membrane. The protein resides in the cell projection. It localises to the phagocytic cup. Its subcellular location is the mitochondrion. It catalyses the reaction GTP + H2O = GDP + phosphate + H(+). Its function is as follows. Immunity-related GTPase that plays important roles in innate immunity and inflammatory response. Acts as a dynamin-like protein that binds to intracellular membranes and promotes remodeling and trafficking of those membranes. Required for clearance of acute protozoan and bacterial infections by interacting with autophagy and lysosome regulatory proteins, thereby promoting the fusion of phagosomes with lysosomes for efficient degradation of cargo including microbes. Regulates selective autophagy, including xenophagy and mitophagy, both directly and indirectly. Directly regulates autophagy by acting as a molecular adapter that promotes the coassembly of the core autophagy machinery to mediate antimicrobial defense: IRGM (1) activates AMPK, which in turn phosphorylates ULK1 and BECN1 to induce autophagy, (2) promotes the coassembly of ULK1 and BECN1, enhancing BECN1-interacting partners and (3) influences the composition of the BECN1 complex, by competing with the negative regulators BCL2 and RUBCN, to trigger autophagy. Also activates autophagy by promoting recruitment of STX17 to autophagosomes. In collaboration with ATG8 proteins, regulate lysosomal biogenesis, a fundamental process for any autophagic pathway, by promoting TFEB dephosphorylation. Also modulates autophagy by assisting with autophagosome formation and preventing lysosomal deacidification. While activating autophagy, acts as a key negative regulator of the inflammatory and interferon responses both by (1) promoting mitophagy and (2) mediating autophagy-dependent degradation of effectors of the inflammatory response. Promotes degradation of damaged and IFNG/IFN-gamma-stressed mitochondria via mitophagy, preventing cytosolic release of ligands that activate inflammation. Acts as a suppressor of inflammation by promoting recruitment of inflammation effectors, such as CGAS, RIGI/RIG-I and NLRP3, to autophagosome membranes, leading to their SQSTM1/p62-dependent autophagic degradation. Also directly inhibits assembly of the NLRP3 inflammasome by preventing the association between NLRP3 and PYCARD. Acts as a negative regulator of antiviral innate immune response by suppressing the RIPK2-dependent pro-inflammatory response: mediates recruitment of RIPosomes, composed of RIPK2 and NOD1 or NOD2, to autophagosome membranes, promoting their SQSTM1/p62-dependent autophagic degradation. Acts as a positive regulator of mitophagy in response to intracellular mycobacteria infection: specifically binds cardiolipin, leading to its translocation to mitochondria, where it promotes affected mitochondrial fission and mitophagy. In terms of biological role, (Microbial infection) Following infection by hepatitis C virus (HCV), promotes HCV-triggered membrane remodeling, leading to autophagy and Golgi fragmentation, a step required for HCV replication. In Homo sapiens (Human), this protein is Immunity-related GTPase family M protein.